Reading from the N-terminus, the 746-residue chain is Stromal interaction molecule 2 (746 aa).

Positions 1-14 (MLVLGLLVAGAADG) are cleaved as a signal peptide. The Extracellular segment spans residues 15 to 218 (CELVPRHLRG…RPPHNWMKDF (204 aa)). One can recognise an EF-hand domain in the interval 67–102 (FSLEALQTIHKQMDDDKDGGIEVEESDEFIREDMKY). Aspartate 80, aspartate 82, aspartate 84, and glutamate 91 together coordinate Ca(2+). Asparagine 135 is a glycosylation site (N-linked (GlcNAc...) asparagine). The SAM domain maps to 136–204 (WTLEDTLQWL…QLKALDVVLF (69 aa)). The helical transmembrane segment at 219–235 (ILTVSIVIGVGGCWFAY) threads the bilayer. The Cytoplasmic segment spans residues 236–746 (TQNKTSKEHV…IKSLFKKKSK (511 aa)). A coiled-coil region spans residues 247–394 (KMMKDLESLQ…EKIKKKRSTV (148 aa)). Residues 483-562 (DLDEDTPPIV…SLPSPDPDIL (80 aa)) form a disordered region. Residue serine 523 is modified to Phosphoserine. A compositionally biased stretch (basic residues) spans 537 to 549 (HPSHPRHPHHPQH). Phosphoserine occurs at positions 609, 621, 640, 650, 661, 665, 680, and 697. The tract at residues 685 to 746 (SSGIPVPKPR…IKSLFKKKSK (62 aa)) is disordered. Residues 723 to 732 (DLCHNGEKSK) are compositionally biased toward basic and acidic residues. The span at 733–746 (KPSKIKSLFKKKSK) shows a compositional bias: basic residues.

Oligomer with STIM1. Interacts with ORAI1. Glycosylated. In terms of processing, phosphorylated predominantly on Ser residues. In terms of tissue distribution, expressed in all tissues and tumor cell lines examined.

It localises to the endoplasmic reticulum membrane. Plays a role in mediating store-operated Ca(2+) entry (SOCE), a Ca(2+) influx following depletion of intracellular Ca(2+) stores. Functions as a highly sensitive Ca(2+) sensor in the endoplasmic reticulum which activates both store-operated and store-independent Ca(2+)-influx. Regulates basal cytosolic and endoplasmic reticulum Ca(2+) concentrations. Upon mild variations of the endoplasmic reticulum Ca(2+) concentration, translocates from the endoplasmic reticulum to the plasma membrane where it probably activates the Ca(2+) release-activated Ca(2+) (CRAC) channels ORAI1, ORAI2 and ORAI3. May inhibit STIM1-mediated Ca(2+) influx. This chain is Stromal interaction molecule 2 (STIM2), found in Homo sapiens (Human).